A 265-amino-acid polypeptide reads, in one-letter code: Nitrogenase iron protein 2 (265 aa).

Position 8–15 (8–15) interacts with ATP; it reads GKGGIGKS. Cysteine 91 contributes to the [4Fe-4S] cluster binding site. Arginine 94 carries the ADP-ribosylarginine; by dinitrogenase reductase ADP-ribosyltransferase modification. Cysteine 126 contacts [4Fe-4S] cluster.

Belongs to the NifH/BchL/ChlL family. In terms of assembly, homodimer. [4Fe-4S] cluster serves as cofactor. In terms of processing, the reversible ADP-ribosylation of Arg-94 inactivates the nitrogenase reductase and regulates nitrogenase activity.

It carries out the reaction N2 + 8 reduced [2Fe-2S]-[ferredoxin] + 16 ATP + 16 H2O = H2 + 8 oxidized [2Fe-2S]-[ferredoxin] + 2 NH4(+) + 16 ADP + 16 phosphate + 6 H(+). In terms of biological role, the key enzymatic reactions in nitrogen fixation are catalyzed by the nitrogenase complex, which has 2 components: the iron protein and the molybdenum-iron protein. The polypeptide is Nitrogenase iron protein 2 (nifH2) (Methanothermobacter thermautotrophicus (strain ATCC 29096 / DSM 1053 / JCM 10044 / NBRC 100330 / Delta H) (Methanobacterium thermoautotrophicum)).